Here is a 440-residue protein sequence, read N- to C-terminus: RNA polymerase II C-terminal domain phosphatase-like 4 (440 aa).

Residues 1–36 show a composition bias toward low complexity; it reads MSVASDSPVHSSSSSDDLAAFLDAELDSASDASSGP. Residues 1–49 form a disordered region; that stretch reads MSVASDSPVHSSSSSDDLAAFLDAELDSASDASSGPSEEEEAEDDVESG. Positions 37–47 are enriched in acidic residues; it reads SEEEEAEDDVE. Positions 118–292 constitute an FCP1 homology domain; it reads QRQRKLYLVL…DHRYKSLSEL (175 aa). In terms of domain architecture, BRCT spans 337 to 429; it reads VRKEILKGCK…MKQPEENFGL (93 aa).

As to quaternary structure, interacts with RAP74. Requires Mg(2+) as cofactor. The cofactor is Co(2+). Mn(2+) is required as a cofactor.

The protein localises to the nucleus. It catalyses the reaction O-phospho-L-seryl-[protein] + H2O = L-seryl-[protein] + phosphate. It carries out the reaction O-phospho-L-threonyl-[protein] + H2O = L-threonyl-[protein] + phosphate. In terms of biological role, processively dephosphorylates 'Ser-2' and/or 'Ser-5' of the heptad repeats YSPTSPS in the C-terminal domain of the largest RNA polymerase II subunit (RPB1). This promotes the activity of RNA polymerase II. Required for normal plant growth. The chain is RNA polymerase II C-terminal domain phosphatase-like 4 (CPL4) from Arabidopsis thaliana (Mouse-ear cress).